The following is a 348-amino-acid chain: Phosphate acyltransferase (348 aa).

The protein belongs to the PlsX family. Homodimer. Probably interacts with PlsY.

It localises to the cytoplasm. It carries out the reaction a fatty acyl-[ACP] + phosphate = an acyl phosphate + holo-[ACP]. It functions in the pathway lipid metabolism; phospholipid metabolism. Its function is as follows. Catalyzes the reversible formation of acyl-phosphate (acyl-PO(4)) from acyl-[acyl-carrier-protein] (acyl-ACP). This enzyme utilizes acyl-ACP as fatty acyl donor, but not acyl-CoA. The chain is Phosphate acyltransferase from Francisella tularensis subsp. novicida (strain U112).